Consider the following 523-residue polypeptide: Translation initiation factor eIF2B subunit delta (523 aa).

The interval 1 to 154 (MAAVAVAVRE…EHTQADDPTL (154 aa)) is disordered. Residue Ala-2 is modified to N-acetylalanine. Ser-12 is subject to Phosphoserine. Over residues 31 to 40 (MTQEEKLQLR) the composition is skewed to basic and acidic residues. Positions 41-51 (KEKKQQKKKRK) are enriched in basic residues. Position 85 is a phosphothreonine (Thr-85). The span at 95–120 (TKAELRAERRAKQEAERALKQARKGE) shows a compositional bias: basic and acidic residues. Ser-129 is subject to Phosphoserine. Residues 170–179 (RKDYGSKVSL) are may bind the chemical integrated stress response (ISR) inhibitor ISRIB.

Belongs to the eIF-2B alpha/beta/delta subunits family. In terms of assembly, component of the translation initiation factor 2B (eIF2B) complex which is a heterodecamer of two sets of five different subunits: alpha, beta, gamma, delta and epsilon. Subunits alpha, beta and delta comprise a regulatory subcomplex and subunits epsilon and gamma comprise a catalytic subcomplex. Within the complex, the hexameric regulatory complex resides at the center, with the two heterodimeric catalytic subcomplexes bound on opposite sides.

It is found in the cytoplasm. The protein localises to the cytosol. Activated by the chemical integrated stress response (ISR) inhibitor ISRIB which stimulates guanine nucleotide exchange factor activity for both phosphorylated and unphosphorylated eIF2. Acts as a component of the translation initiation factor 2B (eIF2B) complex, which catalyzes the exchange of GDP for GTP on eukaryotic initiation factor 2 (eIF2) gamma subunit. Its guanine nucleotide exchange factor activity is repressed when bound to eIF2 complex phosphorylated on the alpha subunit, thereby limiting the amount of methionyl-initiator methionine tRNA available to the ribosome and consequently global translation is repressed. In Oryctolagus cuniculus (Rabbit), this protein is Translation initiation factor eIF2B subunit delta (EIF2B4).